The following is a 508-amino-acid chain: Chromosomal replication initiator protein DnaA (508 aa).

Positions 1–90 (MSVELWQQCV…RRSSAPRAAP (90 aa)) are domain I, interacts with DnaA modulators. The interval 91–171 (NAPVSAAVAA…QVEGALKHTS (81 aa)) is domain II. The segment at 130–160 (EVEEPSSRDSFDSMSDSGSVPAASGRTEQRT) is disordered. The domain III, AAA+ region stretch occupies residues 172 to 388 (YLNRTFTFET…GALKRVIAHS (217 aa)). Positions 216, 218, 219, and 220 each coordinate ATP. Positions 389–508 (HFMGRDITIE…YKNLLRTLTT (120 aa)) are domain IV, binds dsDNA.

It belongs to the DnaA family. In terms of assembly, oligomerizes as a right-handed, spiral filament on DNA at oriC.

The protein localises to the cytoplasm. In terms of biological role, plays an essential role in the initiation and regulation of chromosomal replication. ATP-DnaA binds to the origin of replication (oriC) to initiate formation of the DNA replication initiation complex once per cell cycle. Binds the DnaA box (a 9 base pair repeat at the origin) and separates the double-stranded (ds)DNA. Forms a right-handed helical filament on oriC DNA; dsDNA binds to the exterior of the filament while single-stranded (ss)DNA is stabiized in the filament's interior. The ATP-DnaA-oriC complex binds and stabilizes one strand of the AT-rich DNA unwinding element (DUE), permitting loading of DNA polymerase. After initiation quickly degrades to an ADP-DnaA complex that is not apt for DNA replication. Binds acidic phospholipids. The chain is Chromosomal replication initiator protein DnaA from Pseudomonas entomophila (strain L48).